We begin with the raw amino-acid sequence, 205 residues long: Regulator of G-protein signaling 4 (205 aa).

Residues C2, C12, and C95 are each lipidated (S-palmitoyl cysteine). The RGS domain occupies 62–178 (SLENLINHEC…LKSRFYLDLT (117 aa)).

Either Cys-2 or Cys-12 or both are palmitoylated. Post-translationally, phosphorylated by cyclic GMP-dependent protein kinase.

Its function is as follows. Inhibits signal transduction by increasing the GTPase activity of G protein alpha subunits thereby driving them into their inactive GDP-bound form. Activity on G(z)-alpha is inhibited by phosphorylation of the G-protein. Activity on G(z)-alpha and G(i)-alpha-1 is inhibited by palmitoylation of the G-protein. The chain is Regulator of G-protein signaling 4 (Rgs4) from Rattus norvegicus (Rat).